The chain runs to 153 residues: Hsp90 co-chaperone HCH1 (153 aa).

It belongs to the AHA1 family. As to quaternary structure, monomer. Interacts with HSP82.

Its subcellular location is the cytoplasm. It localises to the nucleus. Functionally, co-chaperone that binds to the molecular chaperone HSP82 and stimulates its ATPase activity. Although not essential, it confers thermotolerance when intracellular levels of HSP82 are limiting. This Saccharomyces cerevisiae (strain ATCC 204508 / S288c) (Baker's yeast) protein is Hsp90 co-chaperone HCH1 (HCH1).